A 351-amino-acid chain; its full sequence is Polyribonucleotide 5'-hydroxyl-kinase TK1956 (351 aa).

34 to 41 (GGVDSGKS) is an ATP binding site.

The cofactor is a divalent metal cation.

It carries out the reaction a 5'-end dephospho-2'-deoxyribonucleoside-DNA + ATP = a 5'-end 5'-phospho-2'-deoxyribonucleoside-DNA + ADP + H(+). The enzyme catalyses a 5'-end dephospho-ribonucleoside-RNA + ATP = a 5'-end 5'-phospho-ribonucleoside-RNA + ADP + H(+). In terms of biological role, polynucleotide kinase that can phosphorylate the 5'-hydroxyl groups of both single-stranded RNA (ssRNA) and single-stranded DNA (ssDNA). Exhibits a strong preference for ssRNA. The chain is Polyribonucleotide 5'-hydroxyl-kinase TK1956 from Thermococcus kodakarensis (strain ATCC BAA-918 / JCM 12380 / KOD1) (Pyrococcus kodakaraensis (strain KOD1)).